A 374-amino-acid polypeptide reads, in one-letter code: Putative L-lysine 2,3-aminomutase aq_1632 (374 aa).

The region spanning 86–314 (HKYPDTALLL…ARVRYVMSHE (229 aa)) is the Radical SAM core domain. Positions 100, 104, and 107 each coordinate [4Fe-4S] cluster. Lys-317 is subject to N6-(pyridoxal phosphate)lysine.

The protein belongs to the radical SAM superfamily. KamA family. The cofactor is [4Fe-4S] cluster. It depends on pyridoxal 5'-phosphate as a cofactor.

The protein is Putative L-lysine 2,3-aminomutase aq_1632 of Aquifex aeolicus (strain VF5).